The chain runs to 750 residues: Photosystem I P700 chlorophyll a apoprotein A1 (750 aa).

A run of 8 helical transmembrane segments spans residues 70–93, 156–179, 195–219, 291–309, 346–369, 385–411, 433–455, and 531–549; these read VFSAHFGQLSIIFLWLSGMYFHGA, LYCTAIGALVFASLMLFAGWFHYH, LNHHLAGLLGLGSLSWAGHQIHVSL, IAHHHLAIAILFLIAGHMY, WHAQLSLNLAMLGSLTIVVAHHMY, LSLFTHHMWIGGFLIVGAAAHAAIFMV, AIISHLNWACIFLGFHSFGLYIH, and FLVHHIHAFTIHVTVLILL. 2 residues coordinate [4Fe-4S] cluster: Cys573 and Cys582. The next 2 helical transmembrane spans lie at 589-610 and 664-686; these read HVFLGLFWMYNAISVVIFHFSW and LSAYGLFFLGAHFVWAFSLMFLF. His675 contacts chlorophyll a'. Chlorophyll a-binding residues include Met683 and Tyr691. Trp692 provides a ligand contact to phylloquinone. The helical transmembrane segment at 724 to 744 threads the bilayer; the sequence is AVGVTHYLLGGIATTWAFFLA.

Belongs to the PsaA/PsaB family. As to quaternary structure, the PsaA/B heterodimer binds the P700 chlorophyll special pair and subsequent electron acceptors. PSI consists of a core antenna complex that captures photons, and an electron transfer chain that converts photonic excitation into a charge separation. The eukaryotic PSI reaction center is composed of at least 11 subunits. Requires P700 is a chlorophyll a/chlorophyll a' dimer, A0 is one or more chlorophyll a, A1 is one or both phylloquinones and FX is a shared 4Fe-4S iron-sulfur center. as cofactor.

It localises to the plastid. Its subcellular location is the chloroplast thylakoid membrane. It catalyses the reaction reduced [plastocyanin] + hnu + oxidized [2Fe-2S]-[ferredoxin] = oxidized [plastocyanin] + reduced [2Fe-2S]-[ferredoxin]. PsaA and PsaB bind P700, the primary electron donor of photosystem I (PSI), as well as the electron acceptors A0, A1 and FX. PSI is a plastocyanin-ferredoxin oxidoreductase, converting photonic excitation into a charge separation, which transfers an electron from the donor P700 chlorophyll pair to the spectroscopically characterized acceptors A0, A1, FX, FA and FB in turn. Oxidized P700 is reduced on the lumenal side of the thylakoid membrane by plastocyanin. The protein is Photosystem I P700 chlorophyll a apoprotein A1 of Phalaenopsis aphrodite subsp. formosana (Moth orchid).